The sequence spans 214 residues: Cysteine-rich venom protein LEI1 (214 aa).

The first 18 residues, 1-18, serve as a signal peptide directing secretion; it reads MIAFILLSLAAVLQQSFG. The region spanning 37 to 165 is the SCP domain; sequence VNMHNSLRRS…YYSYFYVCQY (129 aa). Disulfide bonds link Cys-74/Cys-152, Cys-91/Cys-166, Cys-147/Cys-163, Cys-185/Cys-192, and Cys-188/Cys-197. Residues 201–214 form the ShKT domain; it reads CTVENKFTNCNTLV.

The protein belongs to the CRISP family. As to expression, expressed by the venom gland.

It is found in the secreted. Blocks contraction of smooth muscle elicited by high potassium-induced depolarization, but does not block caffeine-stimulated contraction. May target voltage-gated calcium channels on smooth muscle. This is Cysteine-rich venom protein LEI1 from Leioheterodon madagascariensis (Malagasy giant hognose snake).